An 82-amino-acid chain; its full sequence is uncharacterized protein (82 aa).

A signal peptide spans 1–19; that stretch reads MKNLLKILLIIAFANPVFA.

This is an uncharacterized protein from Rickettsia prowazekii (strain Madrid E).